The sequence spans 201 residues: Pyridoxal 5'-phosphate synthase subunit PdxT (201 aa).

48–50 (GES) lines the L-glutamine pocket. Cysteine 80 acts as the Nucleophile in catalysis. Residues arginine 109 and 137–138 (IR) contribute to the L-glutamine site. Active-site charge relay system residues include histidine 180 and glutamate 182.

This sequence belongs to the glutaminase PdxT/SNO family. In the presence of PdxS, forms a dodecamer of heterodimers. Only shows activity in the heterodimer.

It catalyses the reaction aldehydo-D-ribose 5-phosphate + D-glyceraldehyde 3-phosphate + L-glutamine = pyridoxal 5'-phosphate + L-glutamate + phosphate + 3 H2O + H(+). It carries out the reaction L-glutamine + H2O = L-glutamate + NH4(+). Its pathway is cofactor biosynthesis; pyridoxal 5'-phosphate biosynthesis. Catalyzes the hydrolysis of glutamine to glutamate and ammonia as part of the biosynthesis of pyridoxal 5'-phosphate. The resulting ammonia molecule is channeled to the active site of PdxS. The chain is Pyridoxal 5'-phosphate synthase subunit PdxT from Cutibacterium acnes (strain DSM 16379 / KPA171202) (Propionibacterium acnes).